The sequence spans 129 residues: Gem-associated protein 7 (129 aa).

Met1 is subject to N-acetylmethionine. The SUZ-C domain maps to Met1 to Gly31. The Sm domain maps to Arg63–Leu129.

Belongs to the gemin-7 family. Part of the core SMN complex that contains SMN1, GEMIN2/SIP1, DDX20/GEMIN3, GEMIN4, GEMIN5, GEMIN6, GEMIN7, GEMIN8 and STRAP/UNRIP. Part of the SMN-Sm complex that contains SMN1, GEMIN2/SIP1, DDX20/GEMIN3, GEMIN4, GEMIN5, GEMIN6, GEMIN7, GEMIN8, STRAP/UNRIP and the Sm proteins SNRPB, SNRPD1, SNRPD2, SNRPD3, SNRPE, SNRPF and SNRPG. Interacts with GEMIN6; the interaction is direct. Interacts with STRAP/UNRIP; the interaction is direct. Interacts with GEMIN8; the interaction is direct. Interacts with SNRPB, SNRPD2, SNRPD3 and SNRPE; the interaction is direct.

The protein resides in the nucleus. It is found in the nucleoplasm. The protein localises to the gem. It localises to the cytoplasm. The SMN complex catalyzes the assembly of small nuclear ribonucleoproteins (snRNPs), the building blocks of the spliceosome, and thereby plays an important role in the splicing of cellular pre-mRNAs. Most spliceosomal snRNPs contain a common set of Sm proteins SNRPB, SNRPD1, SNRPD2, SNRPD3, SNRPE, SNRPF and SNRPG that assemble in a heptameric protein ring on the Sm site of the small nuclear RNA to form the core snRNP (Sm core). In the cytosol, the Sm proteins SNRPD1, SNRPD2, SNRPE, SNRPF and SNRPG are trapped in an inactive 6S pICln-Sm complex by the chaperone CLNS1A that controls the assembly of the core snRNP. To assemble core snRNPs, the SMN complex accepts the trapped 5Sm proteins from CLNS1A forming an intermediate. Binding of snRNA inside 5Sm triggers eviction of the SMN complex, thereby allowing binding of SNRPD3 and SNRPB to complete assembly of the core snRNP. This Mus musculus (Mouse) protein is Gem-associated protein 7 (Gemin7).